The following is a 387-amino-acid chain: MSARLKGGLFVRYKQMERKLRLLEIREGYVRKEIETLKREERHSREELDRVKSVPLIMGQFLEPIDSSTAIVGSTAGSNFVVRILSTVDRELLKPNTTVALHRHSSAIVGVLPPEVDSTIPVMGESEKPSVTYGDVGGLDVQKQEIKETVELPLLQSDLYRQIGIDPPQGVLLYGPPGTGKTMLVKAVANHTKATFIRVNGSEFVQKYLGEGPRMVRDVFRLAREKAPSIVFIDEVDSIATKRFDASTSADREVQRVLIELLNQMDGFDPAANVKVIMATNRADTIDPALLRPGRLDRKIEFPLPDRRQKRLVFNAITSKMSLNDSVDIESLVCRPEKISCADINSICQEAGMLAVRASRYMVTQRDFEEAYSKVVERSGTQPAFYN.

175 to 182 (GPPGTGKT) lines the ATP pocket.

The protein belongs to the AAA ATPase family. In terms of assembly, the 26S proteasome consists of a 20S proteasome core and two 19S regulatory subunits. The 20S proteasome core is composed of 28 subunits that are arranged in four stacked rings, resulting in a barrel-shaped structure. The two end rings are each formed by seven alpha subunits, and the two central rings are each formed by seven beta subunits. The catalytic chamber with the active sites is on the inside of the barrel.

It is found in the cytoplasm. It localises to the nucleus. Its function is as follows. Acts as a regulatory subunit of the 26S proteasome which degrades poly-ubiquitinated proteins in the cytoplasm and in the nucleus. It is essential for the regulated turnover of proteins and for the removal of misfolded proteins. The proteasome is a multicatalytic proteinase complex that is characterized by its ability to cleave peptides with Arg, Phe, Tyr, Leu, and Glu adjacent to the leaving group at neutral or slightly basic pH. The protein is 26S proteasome regulatory subunit 6B homolog of Encephalitozoon cuniculi (strain GB-M1) (Microsporidian parasite).